The primary structure comprises 492 residues: G2/mitotic-specific cyclin CYB1 (492 aa).

The disordered stretch occupies residues 1–176 (MPQVTKTNNE…QPEVGERSQS (176 aa)). The span at 23-33 (QESISTIKNTT) shows a compositional bias: polar residues. The span at 34–58 (ISNSQHKQQTQQQISSPPQVSVTSS) shows a compositional bias: low complexity. Positions 59 to 83 (EGVSHVNTRQYLGDVSNQYITNAKP) are enriched in polar residues. Residues 111 to 135 (ASDNNNNGSTSSSSNSSNNNNNDAN) show a composition bias toward low complexity.

This sequence belongs to the cyclin family. Cyclin AB subfamily.

Its function is as follows. Essential for the control of the cell cycle at the G2/M (mitosis) transition. Interacts with the CDC2 protein kinase to form MPF. G2/M cyclins accumulate steadily during G2 and are abruptly destroyed at mitosis. The chain is G2/mitotic-specific cyclin CYB1 (CYB1) from Candida albicans (Yeast).